The following is a 473-amino-acid chain: Trigger factor (473 aa).

The PPIase FKBP-type domain maps to 162–243; that stretch reads GDFVSIDLSA…VKSIKVRELP (82 aa). A disordered region spans residues 433-473; it reads TAEFFGPSGEQAEAEQDEAAPAEDATEETDADSDEAADDSK. Acidic residues predominate over residues 444–473; that stretch reads AEAEQDEAAPAEDATEETDADSDEAADDSK.

The protein belongs to the FKBP-type PPIase family. Tig subfamily.

It is found in the cytoplasm. It catalyses the reaction [protein]-peptidylproline (omega=180) = [protein]-peptidylproline (omega=0). Involved in protein export. Acts as a chaperone by maintaining the newly synthesized protein in an open conformation. Functions as a peptidyl-prolyl cis-trans isomerase. The protein is Trigger factor of Mycolicibacterium vanbaalenii (strain DSM 7251 / JCM 13017 / BCRC 16820 / KCTC 9966 / NRRL B-24157 / PYR-1) (Mycobacterium vanbaalenii).